Consider the following 278-residue polypeptide: Large ribosomal subunit protein uL2 (278 aa).

Residues 211–278 are disordered; it reads KRWLGKRPQS…LIIRRRKGSK (68 aa). The segment covering 258 to 270 has biased composition (basic and acidic residues); that stretch reads KTRDTKKASEKLI.

The protein belongs to the universal ribosomal protein uL2 family. As to quaternary structure, part of the 50S ribosomal subunit. Forms a bridge to the 30S subunit in the 70S ribosome.

In terms of biological role, one of the primary rRNA binding proteins. Required for association of the 30S and 50S subunits to form the 70S ribosome, for tRNA binding and peptide bond formation. It has been suggested to have peptidyltransferase activity; this is somewhat controversial. Makes several contacts with the 16S rRNA in the 70S ribosome. This Lactobacillus helveticus (strain DPC 4571) protein is Large ribosomal subunit protein uL2.